The chain runs to 207 residues: MPEWALYALAAVAGYLSGSIPFGLVIVKAAGLGDIREIGSKSIGATNVLRTGRKDLALATFLLDSLKAGLVALAFTLLAGREVGFVAGFAAFIGHCYPVWLGFKGGKGIATYAGLLAFVSPLHGLVVAAPVWLGLFALTRISSLAALTAAVAVPPGAWLMGERNSLILAGLALLSVFVFWTHRENIGRLLKGTEPRFGAKKKDAPEA.

Helical transmembrane passes span 7–27 (YALAAVAGYLSGSIPFGLVIV), 58–78 (LATFLLDSLKAGLVALAFTLL), 83–103 (VGFVAGFAAFIGHCYPVWLGF), 116–136 (LAFVSPLHGLVVAAPVWLGLF), 141–161 (ISSLAALTAAVAVPPGAWLMG), and 166–186 (LILAGLALLSVFVFWTHRENI).

Belongs to the PlsY family. Probably interacts with PlsX.

Its subcellular location is the cell inner membrane. The enzyme catalyses an acyl phosphate + sn-glycerol 3-phosphate = a 1-acyl-sn-glycero-3-phosphate + phosphate. It functions in the pathway lipid metabolism; phospholipid metabolism. Catalyzes the transfer of an acyl group from acyl-phosphate (acyl-PO(4)) to glycerol-3-phosphate (G3P) to form lysophosphatidic acid (LPA). This enzyme utilizes acyl-phosphate as fatty acyl donor, but not acyl-CoA or acyl-ACP. The polypeptide is Glycerol-3-phosphate acyltransferase (Hyphomonas neptunium (strain ATCC 15444)).